A 352-amino-acid polypeptide reads, in one-letter code: Respiratory nitrate reductase subunit beta (352 aa).

The 4Fe-4S ferredoxin-type 1 domain occupies 20–48 (VAMVMDLNKCIGCQTCTVACKSLWTEGGG). Residues cysteine 29, cysteine 32, cysteine 35, and cysteine 39 each coordinate [4Fe-4S] cluster. Disordered regions lie at residues 63-95 (KGYP…KEDY) and 111-131 (SDRP…DEDQ). A compositionally biased stretch (basic and acidic residues) spans 78-95 (SSEHKERKPGQIPDKEDY). 2 consecutive 4Fe-4S ferredoxin-type domains span residues 139-170 (SYYF…KREE) and 172-201 (GIVL…YNAT). Cysteine 148, cysteine 151, and cysteine 156 together coordinate [4Fe-4S] cluster. The [3Fe-4S] cluster site is built by cysteine 160, cysteine 181, and cysteine 187. The [4Fe-4S] cluster site is built by cysteine 191, cysteine 208, cysteine 211, cysteine 229, and cysteine 233.

As to quaternary structure, probable multiprotein complex; a catalytic heterodimer of an alpha and beta chain is proposed to associate with additional subunits involved in membrane attachment and electron transfer. [4Fe-4S] cluster serves as cofactor. [3Fe-4S] cluster is required as a cofactor.

Its subcellular location is the cell membrane. The catalysed reaction is nitrate + a quinol = a quinone + nitrite + H2O. Its activity is regulated as follows. Inhibited by cyanide, azide and antimycin A. Enzyme stability is not dependent on salt concentration. In terms of biological role, the respiratory membrane-bound nitrate reductase enzyme complex plays a role in generation of metabolic energy by using nitrate as a terminal electron acceptor during anaerobic conditions. The beta chain is an electron transfer unit containing four cysteine clusters involved in the formation of iron-sulfur centers. This is Respiratory nitrate reductase subunit beta (narH) from Haloferax mediterranei (strain ATCC 33500 / DSM 1411 / JCM 8866 / NBRC 14739 / NCIMB 2177 / R-4) (Halobacterium mediterranei).